Reading from the N-terminus, the 444-residue chain is Acetyl-CoA--deacetylcephalosporin C acetyltransferase (444 aa).

A propeptide spanning residues Met-1–Ser-71 is cleaved from the precursor. Residues Val-112 to Val-425 enclose the AB hydrolase-1 domain. Active-site residues include Ser-208 and His-421.

It belongs to the AB hydrolase superfamily. MetX family. In terms of assembly, heterodimer of chain I and chain II.

It carries out the reaction deacetylcephalosporin C + acetyl-CoA = cephalosporin C + CoA. It participates in antibiotic biosynthesis; cephalosporin C biosynthesis. Catalyzes the conversion of deacetylcephalosporin C to cephalosporin C. The chain is Acetyl-CoA--deacetylcephalosporin C acetyltransferase (CEFG) from Hapsidospora chrysogena (Acremonium chrysogenum).